The primary structure comprises 542 residues: Peptide chain release factor 3 (542 aa).

Positions Glu14 to Ala283 constitute a tr-type G domain. GTP is bound by residues Ser23–Thr30, Asp91–His95, and Asn145–Asp148.

The protein belongs to the TRAFAC class translation factor GTPase superfamily. Classic translation factor GTPase family. PrfC subfamily.

It is found in the cytoplasm. In terms of biological role, increases the formation of ribosomal termination complexes and stimulates activities of RF-1 and RF-2. It binds guanine nucleotides and has strong preference for UGA stop codons. It may interact directly with the ribosome. The stimulation of RF-1 and RF-2 is significantly reduced by GTP and GDP, but not by GMP. This is Peptide chain release factor 3 from Cyanothece sp. (strain PCC 7425 / ATCC 29141).